Reading from the N-terminus, the 431-residue chain is Enolase (431 aa).

Gln-167 is a binding site for (2R)-2-phosphoglycerate. Glu-209 (proton donor) is an active-site residue. Residues Asp-246, Glu-289, and Asp-316 each coordinate Mg(2+). (2R)-2-phosphoglycerate-binding residues include Lys-341, Arg-370, Ser-371, and Lys-392. Lys-341 functions as the Proton acceptor in the catalytic mechanism.

It belongs to the enolase family. As to quaternary structure, component of the RNA degradosome, a multiprotein complex involved in RNA processing and mRNA degradation. Mg(2+) serves as cofactor.

It localises to the cytoplasm. The protein localises to the secreted. The protein resides in the cell surface. The enzyme catalyses (2R)-2-phosphoglycerate = phosphoenolpyruvate + H2O. It participates in carbohydrate degradation; glycolysis; pyruvate from D-glyceraldehyde 3-phosphate: step 4/5. Catalyzes the reversible conversion of 2-phosphoglycerate (2-PG) into phosphoenolpyruvate (PEP). It is essential for the degradation of carbohydrates via glycolysis. This Shewanella putrefaciens (strain CN-32 / ATCC BAA-453) protein is Enolase.